A 116-amino-acid polypeptide reads, in one-letter code: Cell cycle protein GpsB (116 aa).

A coiled-coil region spans residues 32 to 69 (LDDVIKDYETYSALVKELREENSRLKQELSKRMQEAPN). The segment at 57 to 78 (KQELSKRMQEAPNSTASQVHQS) is disordered. The span at 67 to 78 (APNSTASQVHQS) shows a compositional bias: polar residues.

It belongs to the GpsB family. Forms polymers through the coiled coil domains. Interacts with PBP1, MreC and EzrA.

It localises to the cytoplasm. Functionally, divisome component that associates with the complex late in its assembly, after the Z-ring is formed, and is dependent on DivIC and PBP2B for its recruitment to the divisome. Together with EzrA, is a key component of the system that regulates PBP1 localization during cell cycle progression. Its main role could be the removal of PBP1 from the cell pole after pole maturation is completed. Also contributes to the recruitment of PBP1 to the division complex. Not essential for septum formation. The protein is Cell cycle protein GpsB of Streptococcus gordonii (strain Challis / ATCC 35105 / BCRC 15272 / CH1 / DL1 / V288).